The following is a 207-amino-acid chain: Peptidyl-tRNA hydrolase (207 aa).

Y17 lines the tRNA pocket. H22 functions as the Proton acceptor in the catalytic mechanism. TRNA is bound by residues F68, N70, and N116.

It belongs to the PTH family. As to quaternary structure, monomer.

The protein localises to the cytoplasm. The enzyme catalyses an N-acyl-L-alpha-aminoacyl-tRNA + H2O = an N-acyl-L-amino acid + a tRNA + H(+). In terms of biological role, hydrolyzes ribosome-free peptidyl-tRNAs (with 1 or more amino acids incorporated), which drop off the ribosome during protein synthesis, or as a result of ribosome stalling. Its function is as follows. Catalyzes the release of premature peptidyl moieties from peptidyl-tRNA molecules trapped in stalled 50S ribosomal subunits, and thus maintains levels of free tRNAs and 50S ribosomes. In Buchnera aphidicola subsp. Baizongia pistaciae (strain Bp), this protein is Peptidyl-tRNA hydrolase.